The following is a 1295-amino-acid chain: Phosphoribosylformylglycinamidine synthase (1295 aa).

The disordered stretch occupies residues 305–327 (WPGAATGSGGEIRDEGATGRGAK). ATP is bound by residues 307–318 (GAATGSGGEIRD) and Ala678. Glu718, Asn722, and Asp884 together coordinate Mg(2+). Ser886 serves as a coordination point for ATP. The 254-residue stretch at 1042–1295 (VAVLREQGVN…IFRNARKQLG (254 aa)) folds into the Glutamine amidotransferase type-1 domain. The active-site Nucleophile is the Cys1135. Residues His1260 and Glu1262 contribute to the active site.

It in the N-terminal section; belongs to the FGAMS family. In terms of assembly, monomer.

It is found in the cytoplasm. The catalysed reaction is N(2)-formyl-N(1)-(5-phospho-beta-D-ribosyl)glycinamide + L-glutamine + ATP + H2O = 2-formamido-N(1)-(5-O-phospho-beta-D-ribosyl)acetamidine + L-glutamate + ADP + phosphate + H(+). It participates in purine metabolism; IMP biosynthesis via de novo pathway; 5-amino-1-(5-phospho-D-ribosyl)imidazole from N(2)-formyl-N(1)-(5-phospho-D-ribosyl)glycinamide: step 1/2. In terms of biological role, phosphoribosylformylglycinamidine synthase involved in the purines biosynthetic pathway. Catalyzes the ATP-dependent conversion of formylglycinamide ribonucleotide (FGAR) and glutamine to yield formylglycinamidine ribonucleotide (FGAM) and glutamate. This Escherichia coli (strain UTI89 / UPEC) protein is Phosphoribosylformylglycinamidine synthase.